Consider the following 530-residue polypeptide: Bifunctional purine biosynthesis protein PurH (530 aa).

The MGS-like domain maps to 1 to 148 (MEQARPIRRA…KNHKDVAIVV (148 aa)).

Belongs to the PurH family.

It carries out the reaction (6R)-10-formyltetrahydrofolate + 5-amino-1-(5-phospho-beta-D-ribosyl)imidazole-4-carboxamide = 5-formamido-1-(5-phospho-D-ribosyl)imidazole-4-carboxamide + (6S)-5,6,7,8-tetrahydrofolate. It catalyses the reaction IMP + H2O = 5-formamido-1-(5-phospho-D-ribosyl)imidazole-4-carboxamide. It functions in the pathway purine metabolism; IMP biosynthesis via de novo pathway; 5-formamido-1-(5-phospho-D-ribosyl)imidazole-4-carboxamide from 5-amino-1-(5-phospho-D-ribosyl)imidazole-4-carboxamide (10-formyl THF route): step 1/1. The protein operates within purine metabolism; IMP biosynthesis via de novo pathway; IMP from 5-formamido-1-(5-phospho-D-ribosyl)imidazole-4-carboxamide: step 1/1. In Aeromonas salmonicida (strain A449), this protein is Bifunctional purine biosynthesis protein PurH.